Consider the following 20-residue polypeptide: ATP synthase subunit beta, chloroplastic (20 aa).

Residues 1–10 are compositionally biased toward polar residues; sequence METTNESLGY. The disordered stretch occupies residues 1–20; that stretch reads METTNESLGYTDQIIGPVLD.

It belongs to the ATPase alpha/beta chains family. In terms of assembly, F-type ATPases have 2 components, CF(1) - the catalytic core - and CF(0) - the membrane proton channel. CF(1) has five subunits: alpha(3), beta(3), gamma(1), delta(1), epsilon(1). CF(0) has four main subunits: a(1), b(1), b'(1) and c(9-12).

The protein resides in the plastid. Its subcellular location is the chloroplast thylakoid membrane. The enzyme catalyses ATP + H2O + 4 H(+)(in) = ADP + phosphate + 5 H(+)(out). Produces ATP from ADP in the presence of a proton gradient across the membrane. The catalytic sites are hosted primarily by the beta subunits. In Chattonella marina var. antiqua (Red tide flagellate), this protein is ATP synthase subunit beta, chloroplastic.